The chain runs to 321 residues: Glucokinase (321 aa).

8 to 13 (GDVGGT) contributes to the ATP binding site.

Belongs to the bacterial glucokinase family.

The protein resides in the cytoplasm. It carries out the reaction D-glucose + ATP = D-glucose 6-phosphate + ADP + H(+). The chain is Glucokinase from Escherichia coli (strain SMS-3-5 / SECEC).